Here is a 134-residue protein sequence, read N- to C-terminus: Ribosome-binding factor A (134 aa).

It belongs to the RbfA family. As to quaternary structure, monomer. Binds 30S ribosomal subunits, but not 50S ribosomal subunits or 70S ribosomes.

Its subcellular location is the cytoplasm. In terms of biological role, one of several proteins that assist in the late maturation steps of the functional core of the 30S ribosomal subunit. Associates with free 30S ribosomal subunits (but not with 30S subunits that are part of 70S ribosomes or polysomes). Required for efficient processing of 16S rRNA. May interact with the 5'-terminal helix region of 16S rRNA. The polypeptide is Ribosome-binding factor A (Cyanothece sp. (strain PCC 7425 / ATCC 29141)).